The sequence spans 66 residues: MKMLKIFLLFLLFWLQCSLWIGKNGILDYIKIYKKIIVQKKKNEDFQIRNNQLILEIERLNNAIKN.

The Cytoplasmic segment spans residues Met1–Met3. The helical transmembrane segment at Leu4–Ile21 threads the bilayer. At Gly22–Asn66 the chain is on the extracellular side. Residues Val38–Asn66 adopt a coiled-coil conformation.

It belongs to the FtsB family.

The protein localises to the cell membrane. Functionally, essential cell division protein. May link together the upstream cell division proteins, which are predominantly cytoplasmic, with the downstream cell division proteins, which are predominantly extracellular. The polypeptide is Cell division protein FtsB (Buchnera aphidicola subsp. Schizaphis graminum (strain Sg)).